Reading from the N-terminus, the 193-residue chain is Probable GTP-binding protein EngB (193 aa).

The 174-residue stretch at 20-193 (GVPEVAFAGR…ELAHEISRCI (174 aa)) folds into the EngB-type G domain. Residues 28–35 (GRSNVGKS), 55–59 (GSTRQ), 73–76 (DLPG), 140–143 (TKAD), and 171–176 (IMWVSS) contribute to the GTP site. S35 and T57 together coordinate Mg(2+).

The protein belongs to the TRAFAC class TrmE-Era-EngA-EngB-Septin-like GTPase superfamily. EngB GTPase family. It depends on Mg(2+) as a cofactor.

Necessary for normal cell division and for the maintenance of normal septation. The protein is Probable GTP-binding protein EngB of Anaplasma phagocytophilum (strain HZ).